Reading from the N-terminus, the 330-residue chain is Aspartate--ammonia ligase (330 aa).

Belongs to the class-II aminoacyl-tRNA synthetase family. AsnA subfamily.

The protein localises to the cytoplasm. It carries out the reaction L-aspartate + NH4(+) + ATP = L-asparagine + AMP + diphosphate + H(+). Its pathway is amino-acid biosynthesis; L-asparagine biosynthesis; L-asparagine from L-aspartate (ammonia route): step 1/1. This is Aspartate--ammonia ligase from Shigella dysenteriae serotype 1 (strain Sd197).